A 433-amino-acid chain; its full sequence is Serine--tRNA ligase (433 aa).

235-237 (TSE) contributes to the L-serine binding site. 266–268 (RSE) contributes to the ATP binding site. E289 provides a ligand contact to L-serine. 353–356 (EISS) is a binding site for ATP. Position 388 (S388) interacts with L-serine.

The protein belongs to the class-II aminoacyl-tRNA synthetase family. Type-1 seryl-tRNA synthetase subfamily. As to quaternary structure, homodimer. The tRNA molecule binds across the dimer.

It localises to the cytoplasm. It catalyses the reaction tRNA(Ser) + L-serine + ATP = L-seryl-tRNA(Ser) + AMP + diphosphate + H(+). The enzyme catalyses tRNA(Sec) + L-serine + ATP = L-seryl-tRNA(Sec) + AMP + diphosphate + H(+). It participates in aminoacyl-tRNA biosynthesis; selenocysteinyl-tRNA(Sec) biosynthesis; L-seryl-tRNA(Sec) from L-serine and tRNA(Sec): step 1/1. Functionally, catalyzes the attachment of serine to tRNA(Ser). Is also able to aminoacylate tRNA(Sec) with serine, to form the misacylated tRNA L-seryl-tRNA(Sec), which will be further converted into selenocysteinyl-tRNA(Sec). The protein is Serine--tRNA ligase of Burkholderia cenocepacia (strain ATCC BAA-245 / DSM 16553 / LMG 16656 / NCTC 13227 / J2315 / CF5610) (Burkholderia cepacia (strain J2315)).